The following is a 476-amino-acid chain: PRAME family member 6 (476 aa).

The LRR 1; degenerate repeat unit spans residues 97-124 (RWKLQVLDLQDVCENFWMVWSEAMARGC). The stretch at 179-203 (HLCCKKLKILGMPFRNIRSILKMVN) is one LRR 2; degenerate repeat. The stretch at 204–230 (LDCIQEVEVNCKWVLPILTQFTPYLGH) is one LRR 3; degenerate repeat. The stretch at 231-266 (MRNLQKLVLSHMDVSRYVSPEQKKEIVTQFTTQFLK) is one LRR 4; degenerate repeat. 5 LRR repeats span residues 267-292 (LCCL…LSCL), 293-324 (KTSL…SQLK), 325-345 (TLDL…QILL), 349-376 (AATL…ALSR), and 377-401 (CFEL…LLSH).

It belongs to the PRAME family. In terms of assembly, component of a CRL2 E3 ubiquitin-protein ligase complex, also named ECS (Elongin BC-CUL2/5-SOCS-box protein) complex, composed of CUL2, Elongin BC (ELOB and ELOC), RBX1 and substrate-specific adapter PRAMEF6.

It participates in protein modification; protein ubiquitination. Substrate-recognition component of a Cul2-RING (CRL2) E3 ubiquitin-protein ligase complex, which mediates ubiquitination of target proteins, leading to their degradation. The CRL2(PRAMEF6) complex mediates ubiquitination and degradation of truncated MSRB1/SEPX1 selenoproteins produced by failed UGA/Sec decoding. In Homo sapiens (Human), this protein is PRAME family member 6.